Reading from the N-terminus, the 228-residue chain is Small ribosomal subunit protein uS3 (228 aa).

One can recognise a KH type-2 domain in the interval 39–107 (VREYLQDKLK…PVHINIEEIR (69 aa)).

It belongs to the universal ribosomal protein uS3 family. As to quaternary structure, part of the 30S ribosomal subunit. Forms a tight complex with proteins S10 and S14.

Its function is as follows. Binds the lower part of the 30S subunit head. Binds mRNA in the 70S ribosome, positioning it for translation. The chain is Small ribosomal subunit protein uS3 from Pseudomonas aeruginosa (strain UCBPP-PA14).